Reading from the N-terminus, the 65-residue chain is DNA-directed RNA polymerase subunit Rpo10 (65 aa).

Zn(2+)-binding residues include cysteine 7, cysteine 10, cysteine 44, and cysteine 45.

This sequence belongs to the archaeal Rpo10/eukaryotic RPB10 RNA polymerase subunit family. Part of the RNA polymerase complex. Zn(2+) serves as cofactor.

The protein localises to the cytoplasm. It carries out the reaction RNA(n) + a ribonucleoside 5'-triphosphate = RNA(n+1) + diphosphate. Functionally, DNA-dependent RNA polymerase (RNAP) catalyzes the transcription of DNA into RNA using the four ribonucleoside triphosphates as substrates. The protein is DNA-directed RNA polymerase subunit Rpo10 of Pyrobaculum arsenaticum (strain DSM 13514 / JCM 11321 / PZ6).